A 636-amino-acid polypeptide reads, in one-letter code: MAPPLLLLLLASGAAACPLPCVCQNLSESLSTLCAHRGLLFVPPNVDRRTVELRLADNFIQALGPPDFRNMTGLVDLTLSRNAITRIGARSFGDLESLRSLHLDGNRLVELGSSSLRGPVNLQHLILSGNQLGRIAPGAFDDFLDSLEDLDVSYNNLRQVPWAGIGSMPALHTLNLDHNLIDALPPGVFAQLSQLSRLDLTSNRLATLAPDPLFSRGRDAEASPSPLVLSFSGNPLHCNCELLWLRRLARPDDLETCASPPTLAGRYFWAVPEGEFSCEPPLIARHTQRLWVLEGQRATLRCRALGDPVPTMHWVGPDDRLVGNSSRAWAFPNGTLEIGVTGAGDAGAYTCIATNPAGEATARVELRVLALPHGGNTSAEGGRPGPSDIAASARTAAEGEGTLESEPAVQVTEVTATSGLVSWGLGRPADPVWMFQIQYNSSEDETLIYRIVPASSHHFLLKHLVPGADYDLCLLALSPAAGPSDLTATRLLGCAHFSTLPATPLCHALQAHVLGGTLTVAVGGVLVAALLVFTVALLVRGRGAGNGRLPLKLSHVQSQTNGGTSPMPKSHPPRSPPPRPQRSCSLDLGDTGGCYGYARRLGGAWARRSHSVHGGLLGAGCRGVGGSAERLEESVV.

The signal sequence occupies residues 1 to 16 (MAPPLLLLLLASGAAA). An LRRNT domain is found at 17-48 (CPLPCVCQNLSESLSTLCAHRGLLFVPPNVDR). Residues 17 to 518 (CPLPCVCQNL…LQAHVLGGTL (502 aa)) are Extracellular-facing. Asn25 and Asn70 each carry an N-linked (GlcNAc...) asparagine glycan. LRR repeat units follow at residues 49–70 (RTVE…DFRN), 73–94 (GLVD…SFGD), 97–118 (SLRS…SLRG), 121–142 (NLQH…AFDD), 146–169 (SLED…GSMP), 170–191 (ALHT…VFAQ), and 194–215 (QLSR…PLFS). Residues 234-280 (NPLHCNCELLWLRRLARPDDLETCASPPTLAGRYFWAVPEGEFSCEP) enclose the LRRCT domain. One can recognise an Ig-like domain in the interval 281–367 (PLIARHTQRL…GEATARVELR (87 aa)). Cys302 and Cys351 are oxidised to a cystine. Asn324, Asn333, Asn376, and Asn440 each carry an N-linked (GlcNAc...) asparagine glycan. Residues 405–502 (SEPAVQVTEV…GCAHFSTLPA (98 aa)) enclose the Fibronectin type-III domain. The chain crosses the membrane as a helical span at residues 519–539 (TVAVGGVLVAALLVFTVALLV). Over 540–636 (RGRGAGNGRL…SAERLEESVV (97 aa)) the chain is Cytoplasmic. The interval 556-585 (VQSQTNGGTSPMPKSHPPRSPPPRPQRSCS) is disordered. Positions 569–580 (KSHPPRSPPPRP) are enriched in pro residues. Phosphoserine occurs at positions 585 and 627. Residues 633–636 (ESVV) carry the PDZ-binding motif.

Belongs to the LRFN family. Can form heteromeric complexes with LRFN1, LRFN2, LRFN3 and LRFN5. Unable to form homophilic interactions across cell junctions. Interacts with DLG1, DLG2 and DLG3. Also interacts with DLG4. Post-translationally, glycosylated. As to expression, expressed in brain and testis. In the brain, weak, but broad expression in the cerebral cortex and diencephalic nuclei. Also detected in other parts of the central nervous system, including the olfactory bulb, pons, cerebellum, and medulla oblongata, as well as in the peripheral nervous system, such as the ganglia of cranial nerves and the dorsal root ganglion during gestation.

The protein resides in the membrane. In terms of biological role, promotes neurite outgrowth in hippocampal neurons. May play a role in redistributing DLG4 to the cell periphery. The protein is Leucine-rich repeat and fibronectin type-III domain-containing protein 4 (Lrfn4) of Mus musculus (Mouse).